The primary structure comprises 312 residues: Glycerol 2-dehydrogenase (NADP(+)) (312 aa).

Tyr56 functions as the Proton donor in the catalytic mechanism. His112 contacts substrate. 220-274 lines the NADP(+) pocket; it reads SPLGSTDAPLLKEPVILEIAKKNNVQPGHVVISWHVQRGYVVLPKSVNPDRIKTN. Residue Ser306 is modified to Phosphoserine.

Belongs to the aldo/keto reductase family.

It localises to the cytoplasm. It carries out the reaction glycerol + NADP(+) = dihydroxyacetone + NADPH + H(+). In terms of biological role, glycerol dehydrogenase involved in glycerol catabolism under microaerobic conditions. Has mRNA binding activity. This Saccharomyces cerevisiae (strain ATCC 204508 / S288c) (Baker's yeast) protein is Glycerol 2-dehydrogenase (NADP(+)) (GCY1).